A 534-amino-acid polypeptide reads, in one-letter code: Calmodulin calcium-dependent NAD kinase (534 aa).

Residues 167 to 196 (QKVPKLKDFVMAATRKQRFERVTKDLKVKR) are calmodulin-binding. An ATP-binding site is contributed by 238 to 245 (GGMGAGKS).

In terms of assembly, interacts with calmodulin (CaM) in a calcium Ca(2+)-dependent manner in vitro. Ca(2+) serves as cofactor.

The protein localises to the mitochondrion outer membrane. The enzyme catalyses NAD(+) + ATP = ADP + NADP(+) + H(+). Its function is as follows. Phosphorylates NAD(+) to produce NADP(+) in a calmodulin calcium-dependent manner. Does not possess activity toward NADH. Has broad specificity for the phosphoryl donor, as ATP, CTP, GTP and UTP can be used interchangeably and produce similar efficiencies. May play a role in producing NADP(H) needed to regulate the elicitor-induced reactive oxygen species (ROS) burst by sustaining the activity of NADPH oxidases. Does not seem to play a role in photosynthesis-driven growth. The sequence is that of Calmodulin calcium-dependent NAD kinase from Arabidopsis thaliana (Mouse-ear cress).